The primary structure comprises 816 residues: Phosphatidylinositol 4-kinase beta (816 aa).

Disordered regions lie at residues 1–28, 93–120, and 249–318; these read MGDT…NGGS, PPTG…RRRR, and HRKR…SFSS. Gly2 is modified (N-acetylglycine). Residues 2 to 68 form an interaction with ACBD3 region; sequence GDTVVAPAPL…VKLSHGGVAS (67 aa). Positions 49-242 constitute a PIK helical domain; sequence QKACQEVLQK…GTKLRRLILS (194 aa). Ser258 carries the phosphoserine modification. Phosphothreonine is present on Thr263. A phosphoserine mark is found at Ser266, Ser275, Ser277, Ser284, Ser294, Ser428, and Ser511. Over residues 278 to 294 the composition is skewed to low complexity; sequence DATASISLSSSLKRTAS. Residues Thr517 and Thr519 each carry the phosphothreonine modification. One can recognise a PI3K/PI4K catalytic domain in the interval 535-801; sequence EPWQEKVRRI…MVDGSMRSIT (267 aa). The segment at 541–547 is G-loop; the sequence is VRRIREG. A catalytic loop region spans residues 668–676; the sequence is QVKDRHNGN. The tract at residues 687–711 is activation loop; sequence HIDFGFILSSSPRNLGFETSAFKLT.

Belongs to the PI3/PI4-kinase family. Type III PI4K subfamily. As to quaternary structure, interacts with ARF1 and ARF3 in the Golgi complex, but not with ARF4, ARF5 or ARF6. Interacts with NCS1/FREQ in a calcium-independent manner. Interacts with CALN1/CABP8 and CALN2/CABP7; in a calcium-dependent manner; this interaction competes with NCS1/FREQ binding. Interacts with ACBD3. Interacts with ARMH3, YWHAB, YWHAE, YWHAG, YWHAH, YWHAQ, YWHAZ and SFN. Interacts with GGA2 (via VHS domain); the interaction is important for PI4KB location at the Golgi apparatus membrane. Interacts with ATG9A. The cofactor is Mg(2+). Requires Mn(2+) as cofactor.

It localises to the endomembrane system. It is found in the mitochondrion outer membrane. The protein resides in the rough endoplasmic reticulum membrane. Its subcellular location is the golgi apparatus. The protein localises to the golgi apparatus membrane. The enzyme catalyses a 1,2-diacyl-sn-glycero-3-phospho-(1D-myo-inositol) + ATP = a 1,2-diacyl-sn-glycero-3-phospho-(1D-myo-inositol 4-phosphate) + ADP + H(+). With respect to regulation, inhibited by wortmannin. Increased kinase activity upon interaction with NCS1/FREQ. Phosphorylates phosphatidylinositol (PI) in the first committed step in the production of the second messenger inositol-1,4,5,-trisphosphate (PIP). May regulate Golgi disintegration/reorganization during mitosis, possibly via its phosphorylation. Involved in Golgi-to-plasma membrane trafficking. May play an important role in the inner ear development. This Rhinolophus ferrumequinum (Greater horseshoe bat) protein is Phosphatidylinositol 4-kinase beta (PI4KB).